Consider the following 2957-residue polypeptide: Toxin PAU_02230 (2957 aa).

Residues 949 to 968 (TSVSPAETAQSTPEPLSDFA) are disordered. The segment at 2115 to 2144 (EWFKHSETGLKGGGPIDDIRKYIARKSAIK) is membrane localization domain that interacts with the inner leaflet of the plasma membrane. The tract at residues 2115–2449 (EWFKHSETGL…TSTIVTPLAP (335 aa)) is tyrosine glycosyltransferase PaToxG. UDP-N-acetyl-alpha-D-glucosamine is bound by residues 2169–2171 (IWI) and 2259–2260 (SD). A divalent metal cation is bound by residues aspartate 2276 and aspartate 2278. The DxDD motif motif lies at 2276 to 2279 (DIDD). Asparagine 2312 is a UDP-N-acetyl-alpha-D-glucosamine binding site. Residues 2450–2672 (KTEMLPPVPS…NYSVNPTAEN (223 aa)) are sseI-like deamidase PaToxD. Residues cysteine 2509, histidine 2547, and aspartate 2562 each act as for deamidase activity in the active site. The segment at 2667–2705 (NPTAENLSPPPPPPIPSHGQVPKTVTPPPPPMRSPLSLS) is disordered.

The cofactor is a divalent metal cation.

It is found in the secreted. The protein resides in the host cell membrane. It catalyses the reaction L-tyrosyl-[protein] + UDP-N-acetyl-alpha-D-glucosamine = O-(N-acetyl-alpha-D-glucosaminyl)-L-tyrosyl-[protein] + UDP + H(+). The enzyme catalyses L-glutaminyl-[protein] + H2O = L-glutamyl-[protein] + NH4(+). Its function is as follows. Toxin that acts on host cells by modifying Rho proteins by tyrosine GlcNAcylation and heterotrimeric G alpha proteins by deamidation. Catalyzes the mono-O-GlcNAcylation of small GTPases of the Rho family (RhoA, RhoB, RhoC, Rac1, Rac2, Rac3, Cdc42) in eukaryotic host cells at the conserved tyrosine residue located in the switch I region (Tyr-32/34), using UDP-N-acetylglucosamine (UDP-GlcNAc) as the sugar donor; other GTPases of the Rho, Ras or Rab families are not substrates. Tyrosine glycosylation inhibits Rho activation and prevents interaction with downstream effectors, resulting in actin disassembly, inhibition of phagocytosis, cell rounding, and toxicity toward insects and mammalian cells. Also catalyzes the deamidation of the catalytic glutamine in heterotrimeric G alpha proteins (Gi, Gq/11), which blocks GTP hydrolysis and arrests the G proteins in a permanent active state leading to activation of Rho GTPases. Thus, PaTox hijacks host GTPase signaling in a bidirectional manner by deamidation-induced activation and glycosylation-induced inactivation of GTPases. This Photorhabdus asymbiotica subsp. asymbiotica (strain ATCC 43949 / 3105-77) (Xenorhabdus luminescens (strain 2)) protein is Toxin PAU_02230.